Reading from the N-terminus, the 179-residue chain is Cell division protein SepF (179 aa).

The tract at residues 19–55 (DSSLPYEKRDEPVFTSVNSSQEPALPMNQPSQSAGAK) is disordered. Residues 33 to 55 (TSVNSSQEPALPMNQPSQSAGAK) are compositionally biased toward polar residues.

This sequence belongs to the SepF family. As to quaternary structure, homodimer. Interacts with FtsZ.

The protein resides in the cytoplasm. In terms of biological role, cell division protein that is part of the divisome complex and is recruited early to the Z-ring. Probably stimulates Z-ring formation, perhaps through the cross-linking of FtsZ protofilaments. Its function overlaps with FtsA. The polypeptide is Cell division protein SepF (Streptococcus pneumoniae (strain JJA)).